The primary structure comprises 297 residues: Transmembrane protein 178A (297 aa).

Residues 1–25 form the signal peptide; it reads MEPRALVTALSLGLSLCSLGLLVTA. Residues 26–179 lie on the Extracellular side of the membrane; sequence IFTDHWYETD…LLHLRRITAG (154 aa). Basic and acidic residues predominate over residues 41–57; sequence ESCERSRAGADPPDQKN. Residues 41–84 are disordered; that stretch reads ESCERSRAGADPPDQKNRLMPLSHLPLRDSPPLGRRLLPGGPGR. The span at 68–79 shows a compositional bias: low complexity; that stretch reads RDSPPLGRRLLP. N-linked (GlcNAc...) asparagine glycosylation is present at asparagine 158. Residues 180–200 traverse the membrane as a helical segment; that stretch reads FLGMAVAVLLCGCIVATVSFF. The Cytoplasmic segment spans residues 201–208; sequence WEESLTQH. Residues 209–229 traverse the membrane as a helical segment; sequence VAGLLFLMTGIFCTISLCTYA. Residues 230–257 lie on the Extracellular side of the membrane; it reads ASISYDLNRLPKLIYSLPADVEHGYSWS. The chain crosses the membrane as a helical span at residues 258 to 278; it reads IFCAWCSLGFIVAAGGLCIAY. Residues 279–297 lie on the Cytoplasmic side of the membrane; it reads PFISRTKIAQLKSGRDSTV.

The protein belongs to the TMEM178 family. As to quaternary structure, interacts with STIM1.

It localises to the endoplasmic reticulum membrane. In terms of biological role, acts as a negative regulator of osteoclast differentiation in basal and inflammatory conditions by regulating TNFSF11-induced Ca (2+) fluxes, thereby controlling the induction of NFATC1. This Homo sapiens (Human) protein is Transmembrane protein 178A (TMEM178A).